The following is a 183-amino-acid chain: Putative manganese efflux pump MntP (183 aa).

A run of 6 helical transmembrane segments spans residues 3–23 (TISV…LSIY), 43–63 (TFGI…ILFI), 66–86 (ISLY…LMML), 107–127 (LIIM…TFSI), 134–154 (FLYT…GFIL), and 161–181 (ILGQ…SINI).

This sequence belongs to the MntP (TC 9.B.29) family.

It localises to the cell inner membrane. In terms of biological role, probably functions as a manganese efflux pump. In Fusobacterium nucleatum subsp. nucleatum (strain ATCC 25586 / DSM 15643 / BCRC 10681 / CIP 101130 / JCM 8532 / KCTC 2640 / LMG 13131 / VPI 4355), this protein is Putative manganese efflux pump MntP.